We begin with the raw amino-acid sequence, 477 residues long: Adenylyl cyclase-associated protein 2 (477 aa).

Alanine 2 is modified (N-acetylalanine). 2 disordered regions span residues 224 to 261 and 274 to 323; these read VLSS…PSRS and TKGL…KHAP. Positions 230 to 246 are enriched in pro residues; sequence GLPPPPPPPPPPGPPPL. Residues serine 301 and serine 309 each carry the phosphoserine modification. The segment covering 301–320 has biased composition (low complexity); the sequence is SPTKSHTPSPTSPKSYPSQK. Positions 317 to 455 constitute a C-CAP/cofactor C-like domain; that stretch reads PSQKHAPVLE…QDGDYREFPI (139 aa).

The protein belongs to the CAP family.

The protein resides in the cell membrane. Its function is as follows. Involved in the regulation of actin polymerization. The chain is Adenylyl cyclase-associated protein 2 (CAP2) from Pongo abelii (Sumatran orangutan).